We begin with the raw amino-acid sequence, 828 residues long: Periplasmic nitrate reductase (828 aa).

The segment at residues 1-31 (MKLSRRHFMKANAVAAAAAVAGITIPIAVRA) is a signal peptide (tat-type signal). Residues 39–95 (IHWDKAPCRFCGVGCGVLVGTQNGRIVASQGDPDAPVNRGLNCIKGYFLPKIMYGQD) enclose the 4Fe-4S Mo/W bis-MGD-type domain. 4 residues coordinate [4Fe-4S] cluster: cysteine 46, cysteine 49, cysteine 53, and cysteine 81. Mo-bis(molybdopterin guanine dinucleotide) contacts are provided by residues lysine 83, glutamine 150, asparagine 175, cysteine 179, 212 to 219 (WGSNMAEM), 243 to 247 (STYQH), 262 to 264 (QTD), methionine 372, glutamine 376, asparagine 482, 508 to 509 (SD), lysine 531, aspartate 558, and 718 to 727 (TGRVLEHWHT). A substrate-binding site is contributed by phenylalanine 794. The Mo-bis(molybdopterin guanine dinucleotide) site is built by asparagine 802 and lysine 819.

This sequence belongs to the prokaryotic molybdopterin-containing oxidoreductase family. NasA/NapA/NarB subfamily. In terms of assembly, component of the periplasmic nitrate reductase NapAB complex composed of NapA and NapB. The cofactor is [4Fe-4S] cluster. Mo-bis(molybdopterin guanine dinucleotide) serves as cofactor. In terms of processing, predicted to be exported by the Tat system. The position of the signal peptide cleavage has not been experimentally proven.

Its subcellular location is the periplasm. It catalyses the reaction 2 Fe(II)-[cytochrome] + nitrate + 2 H(+) = 2 Fe(III)-[cytochrome] + nitrite + H2O. Its function is as follows. Catalytic subunit of the periplasmic nitrate reductase complex NapAB. Receives electrons from NapB and catalyzes the reduction of nitrate to nitrite. The sequence is that of Periplasmic nitrate reductase from Pectobacterium carotovorum subsp. carotovorum (strain PC1).